A 160-amino-acid chain; its full sequence is Putative tRNA (cytidine(34)-2'-O)-methyltransferase (160 aa).

Isoleucine 82, glycine 107, leucine 128, and serine 136 together coordinate S-adenosyl-L-methionine.

This sequence belongs to the class IV-like SAM-binding methyltransferase superfamily. RNA methyltransferase TrmH family. TrmL subfamily.

Its subcellular location is the cytoplasm. The catalysed reaction is cytidine(34) in tRNA + S-adenosyl-L-methionine = 2'-O-methylcytidine(34) in tRNA + S-adenosyl-L-homocysteine + H(+). The enzyme catalyses 5-carboxymethylaminomethyluridine(34) in tRNA(Leu) + S-adenosyl-L-methionine = 5-carboxymethylaminomethyl-2'-O-methyluridine(34) in tRNA(Leu) + S-adenosyl-L-homocysteine + H(+). Could methylate the ribose at the nucleotide 34 wobble position in tRNA. This Bacillus subtilis (strain 168) protein is Putative tRNA (cytidine(34)-2'-O)-methyltransferase (cspR).